A 394-amino-acid polypeptide reads, in one-letter code: D-mannose isomerase (394 aa).

Residues histidine 251 and histidine 380 each act as proton donor/acceptor in the active site.

It belongs to the N-acylglucosamine 2-epimerase family. Monomer.

It carries out the reaction D-mannose = D-fructose. It catalyses the reaction D-lyxose = D-xylulose. Catalyzes the reversible isomerization of D-mannose to D-fructose. Can also isomerize D-lyxose, with lower efficiency. In longer reaction with a higher concentration of enzyme, it can isomerize 4-OH D-mannose derivatives (D-talose and 4-O-monosaccharyl-D-mannose). Cannot use D-glucose. The sequence is that of D-mannose isomerase from Marinomonas mediterranea (strain ATCC 700492 / JCM 21426 / NBRC 103028 / MMB-1).